The chain runs to 639 residues: Threonine--tRNA ligase (639 aa).

In terms of domain architecture, TGS spans 1–61; the sequence is MATVRLPDGK…DGGGELEFVT (61 aa). Residues 239 to 536 are catalytic; the sequence is DHRRLGRELG…LIEHYAGAFP (298 aa). Positions 333, 384, and 513 each coordinate Zn(2+).

It belongs to the class-II aminoacyl-tRNA synthetase family. Homodimer. Zn(2+) is required as a cofactor.

It is found in the cytoplasm. The enzyme catalyses tRNA(Thr) + L-threonine + ATP = L-threonyl-tRNA(Thr) + AMP + diphosphate + H(+). Catalyzes the attachment of threonine to tRNA(Thr) in a two-step reaction: L-threonine is first activated by ATP to form Thr-AMP and then transferred to the acceptor end of tRNA(Thr). Also edits incorrectly charged L-seryl-tRNA(Thr). The polypeptide is Threonine--tRNA ligase (Rubrobacter xylanophilus (strain DSM 9941 / JCM 11954 / NBRC 16129 / PRD-1)).